We begin with the raw amino-acid sequence, 1017 residues long: DNA polymerase (1017 aa).

The protein belongs to the DNA polymerase type-B family. Heterodimer with the terminal protein; this heterodimer binds to bp 9 to 18 of the genome. Forms a complex with viral pTP, DBP and hosts NFIA and POU2F1/OCT1 for initiation of replication.

It is found in the host nucleus. It catalyses the reaction DNA(n) + a 2'-deoxyribonucleoside 5'-triphosphate = DNA(n+1) + diphosphate. Its function is as follows. Eukaryotic-type DNA polymerase involved in viral genomic replication. DNA synthesis is protein primed, and acts in a strand displacement replication. Assembles in complex with viral pTP, DBP, host NFIA and host POU2F1/OCT1 on viral origin of replication. The polymerase covalently transfers dCMP onto pTP, thereby initiating complementary strand synthesis. The polypeptide is DNA polymerase (Bovine adenovirus 2 (BAdV-2)).